Consider the following 312-residue polypeptide: tRNA uridine(34) hydroxylase (312 aa).

Residues 130-225 (RGDDVVFFDG…YGEKYGNDGL (96 aa)) enclose the Rhodanese domain. C185 acts as the Cysteine persulfide intermediate in catalysis.

Belongs to the TrhO family.

It carries out the reaction uridine(34) in tRNA + AH2 + O2 = 5-hydroxyuridine(34) in tRNA + A + H2O. Functionally, catalyzes oxygen-dependent 5-hydroxyuridine (ho5U) modification at position 34 in tRNAs. The sequence is that of tRNA uridine(34) hydroxylase from Corynebacterium diphtheriae (strain ATCC 700971 / NCTC 13129 / Biotype gravis).